Reading from the N-terminus, the 252-residue chain is MHPKQQRESFRSKQYTGTTSGMCDNYLQANMIILPKEYAFEFLLFCQRNPKSCPIIDVLEEGVTTPQIADADIRTDLPKYRIYRNGQLDKEVTDIKDKWRADFVTFLIGCSFTFEKALIENGIRLLHQEQERVVPMYKTNIPCEKAGRFEGNMVVSMRALEPEEIDKAVKITERFETSHGSPVHIGNPEEIGIKDIDNPDYGESISFDKKKRTPVFWACGVTPQNVGLNVKPPIMIAHAPGHMLITDQLEEK.

It belongs to the D-glutamate cyclase family.

This is Putative hydro-lyase OB3382 from Oceanobacillus iheyensis (strain DSM 14371 / CIP 107618 / JCM 11309 / KCTC 3954 / HTE831).